A 142-amino-acid polypeptide reads, in one-letter code: gSG7 salivary protein (142 aa).

The N-terminal stretch at 1–25 (METKLVLALIACGVICLLQTTPTEA) is a signal peptide. 2 disulfides stabilise this stretch: C83-C138 and C106-C116.

Interacts with host coagulation factor XII (F12) (inactive and activated). Interacts with host high molecular weight kininogen (KNG1) (inactive and activated).

Its subcellular location is the secreted. Zn(2+) modulates binding to host coagulation factor XII (F12) and high molecular weight kininogen (KNG1). Salivary protein with anticoagulant activity. Inhibits activation of host kallikrein-kinin system by preventing the reciprocal activation of coagulation factor XII (F12) and prekallikrein (KLKB1), and subsequent release of bradykinin. Inhibits host factor XII and high molecular weight kininogen (KNG1) binding to negatively charged surfaces. Weakly inhibits the alternative pathway of complement system activation in the host. The protein is gSG7 salivary protein of Anopheles stephensi (Indo-Pakistan malaria mosquito).